Consider the following 295-residue polypeptide: Alpha-1A adrenergic receptor (295 aa).

At methionine 1–isoleucine 27 the chain is on the extracellular side. Asparagine 7, asparagine 13, and asparagine 22 each carry an N-linked (GlcNAc...) asparagine glycan. A helical membrane pass occupies residues leucine 28–valine 51. Topologically, residues alanine 52–tyrosine 64 are cytoplasmic. A helical membrane pass occupies residues isoleucine 65–isoleucine 88. At leucine 89 to cysteine 99 the chain is on the extracellular side. Cysteines 99 and 176 form a disulfide. Residues asparagine 100–isoleucine 122 form a helical membrane-spanning segment. The Cytoplasmic portion of the chain corresponds to aspartate 123–glycine 143. A helical membrane pass occupies residues leucine 144–glutamine 167. At proline 168 to glutamate 181 the chain is on the extracellular side. Residues proline 182–cysteine 205 traverse the membrane as a helical segment. Residues arginine 206 to threonine 273 lie on the Cytoplasmic side of the membrane. A Phosphoserine; by PKA modification is found at serine 215. A helical membrane pass occupies residues leucine 274–glycine 295.

This sequence belongs to the G-protein coupled receptor 1 family. Adrenergic receptor subfamily. ADRA1A sub-subfamily. As to quaternary structure, homo- and heterooligomer. Heterooligomerizes with ADRA1B homooligomers in cardiac myocytes. Interacts with CAVIN4.

Its subcellular location is the nucleus membrane. It localises to the cell membrane. It is found in the cytoplasm. The protein resides in the membrane. The protein localises to the caveola. This alpha-adrenergic receptor mediates its action by association with G proteins that activate a phosphatidylinositol-calcium second messenger system. Its effect is mediated by G(q) and G(11) proteins. Nuclear ADRA1A-ADRA1B heterooligomers regulate phenylephrine (PE)-stimulated ERK signaling in cardiac myocytes. The sequence is that of Alpha-1A adrenergic receptor (ADRA1A) from Canis lupus familiaris (Dog).